The following is a 704-amino-acid chain: Serotransferrin (704 aa).

The signal sequence occupies residues 1–19 (MRPAVRALLACAVLGLCLA). 2 consecutive Transferrin-like domains span residues 25-351 (VRWC…NLRE) and 364-689 (VKWC…NLRQ). 2 cysteine pairs are disulfide-bonded: cysteine 28/cysteine 66 and cysteine 38/cysteine 57. Arginine 42 carries the post-translational modification Dimethylated arginine. The Fe(3+) site is built by aspartate 81 and tyrosine 113. 5 disulfide bridges follow: cysteine 136–cysteine 217, cysteine 176–cysteine 192, cysteine 179–cysteine 200, cysteine 189–cysteine 202, and cysteine 250–cysteine 264. Hydrogencarbonate contacts are provided by threonine 138, arginine 142, alanine 144, and glycine 145. Tyrosine 211 serves as a coordination point for Fe(3+). Residue histidine 272 participates in Fe(3+) binding. Cystine bridges form between cysteine 362–cysteine 622, cysteine 367–cysteine 399, cysteine 377–cysteine 390, cysteine 424–cysteine 699, cysteine 441–cysteine 663, cysteine 473–cysteine 549, cysteine 497–cysteine 690, cysteine 507–cysteine 521, cysteine 518–cysteine 532, cysteine 589–cysteine 603, and cysteine 641–cysteine 646. Fe(3+)-binding residues include aspartate 414 and tyrosine 449. Threonine 475, arginine 479, alanine 481, and glycine 482 together coordinate hydrogencarbonate. Asparagine 514 carries N-linked (GlcNAc...) asparagine glycosylation. Tyrosine 543 serves as a coordination point for Fe(3+). Residue histidine 611 coordinates Fe(3+). Phosphoserine is present on serine 691.

This sequence belongs to the transferrin family. In terms of assembly, monomer. Part of a complex composed of SLC40A1/ferroportin, TF/transferrin and HEPH/hephaestin that transfers iron from cells to transferrin. Expressed by the liver and secreted in plasma.

The protein localises to the secreted. Its function is as follows. Transferrins are iron binding transport proteins which can bind two Fe(3+) ions in association with the binding of an anion, usually bicarbonate. It is responsible for the transport of iron from sites of absorption and heme degradation to those of storage and utilization. Serum transferrin may also have a further role in stimulating cell proliferation. This Bos taurus (Bovine) protein is Serotransferrin (TF).